We begin with the raw amino-acid sequence, 629 residues long: tRNA uridine 5-carboxymethylaminomethyl modification enzyme MnmG (629 aa).

FAD is bound by residues 13–18, Val-125, and Ser-180; that span reads GGGHAG. An NAD(+)-binding site is contributed by 273–287; sequence GPRYCPSIEDKVMRF. An FAD-binding site is contributed by Gln-370.

Belongs to the MnmG family. In terms of assembly, homodimer. Heterotetramer of two MnmE and two MnmG subunits. The cofactor is FAD.

Its subcellular location is the cytoplasm. Functionally, NAD-binding protein involved in the addition of a carboxymethylaminomethyl (cmnm) group at the wobble position (U34) of certain tRNAs, forming tRNA-cmnm(5)s(2)U34. This Salmonella dublin (strain CT_02021853) protein is tRNA uridine 5-carboxymethylaminomethyl modification enzyme MnmG.